The chain runs to 127 residues: Glycine cleavage system H protein (127 aa).

One can recognise a Lipoyl-binding domain in the interval 24–106 (TVTVGITDHA…FEGAWIAKIK (83 aa)). Residue K65 is modified to N6-lipoyllysine.

Belongs to the GcvH family. In terms of assembly, the glycine cleavage system is composed of four proteins: P, T, L and H. (R)-lipoate is required as a cofactor.

The glycine cleavage system catalyzes the degradation of glycine. The H protein shuttles the methylamine group of glycine from the P protein to the T protein. In Marinomonas sp. (strain MWYL1), this protein is Glycine cleavage system H protein.